The primary structure comprises 119 residues: Small ribosomal subunit protein uS10 (119 aa).

Belongs to the universal ribosomal protein uS10 family. Component of the small ribosomal subunit. Mature ribosomes consist of a small (40S) and a large (60S) subunit. The 40S subunit contains about 32 different proteins and 1 molecule of RNA (18S). The 60S subunit contains 45 different proteins and 3 molecules of RNA (25S, 5.8S and 5S).

It localises to the cytoplasm. Its function is as follows. Component of the ribosome, a large ribonucleoprotein complex responsible for the synthesis of proteins in the cell. The small ribosomal subunit (SSU) binds messenger RNAs (mRNAs) and translates the encoded message by selecting cognate aminoacyl-transfer RNA (tRNA) molecules. The large subunit (LSU) contains the ribosomal catalytic site termed the peptidyl transferase center (PTC), which catalyzes the formation of peptide bonds, thereby polymerizing the amino acids delivered by tRNAs into a polypeptide chain. The nascent polypeptides leave the ribosome through a tunnel in the LSU and interact with protein factors that function in enzymatic processing, targeting, and the membrane insertion of nascent chains at the exit of the ribosomal tunnel. The sequence is that of Small ribosomal subunit protein uS10 (RPS20) from Candida albicans (strain SC5314 / ATCC MYA-2876) (Yeast).